The following is a 205-amino-acid chain: Microtubule-associated protein Jupiter (205 aa).

Ser-30 is subject to Phosphoserine. Thr-41, Thr-98, and Thr-102 each carry phosphothreonine. Polar residues predominate over residues 124–135; it reads LISNSKGNYNGK. The interval 124–205 is disordered; it reads LISNSKGNYN…PPGGYSSGLW (82 aa). Residues 136–149 show a composition bias toward low complexity; sequence SGSVSSASSSVSSS. Ser-138 and Ser-149 each carry phosphoserine. Residues 181-191 show a composition bias toward polar residues; it reads PANNGSSQVIN.

It belongs to the MAP Jupiter family.

Its subcellular location is the nucleus. It is found in the cytoplasm. It localises to the cytoskeleton. The protein localises to the spindle. Functionally, binds to all microtubule populations. This is Microtubule-associated protein Jupiter from Drosophila virilis (Fruit fly).